The following is a 478-amino-acid chain: Transcription factor PIF1 (478 aa).

Threonine 10 is modified (phosphothreonine; by CK2). Disordered regions lie at residues 56–80 (LHTK…QPSS), 122–144 (VSQV…PVRN), 172–210 (VRES…GGGA), 230–294 (TSSS…LSER), and 391–478 (TQTH…HTTG). The span at 69-80 (LPSMDPQQQPSS) shows a compositional bias: low complexity. Low complexity predominate over residues 179-189 (SPSATPSAAAS). A Phosphothreonine; by CK2 modification is found at threonine 197. Serine 202 is modified (phosphoserine; by CK2). Composition is skewed to basic and acidic residues over residues 238–272 (SEIE…ETKQ) and 284–294 (RAAEVHNLSER). Residues 284–333 (RAAEVHNLSERKRRDRINERMKALQELIPRCNKSDKASMLDEAIEYMKSL) enclose the bHLH domain. Residues 415-426 (PNQQYDPTSGQP) are compositionally biased toward polar residues. 4 positions are modified to phosphoserine; by CK2: serine 464, serine 465, serine 466, and serine 469. A compositionally biased stretch (basic and acidic residues) spans 465 to 478 (SSKESEDHGNHTTG).

Homodimer. Interacts with the photoactivated conformer (Pfr) of phytochromes A and B, PHYA and PHYB. Also interacts with APRR1/TOC1. Binds to RGL2, RGA and FHY3 (via N-terminus). Associates to PTAC12/HMR/PAP5 which acts as a transcriptional coactivator. Binds directly to PCH1 and PCHL; this interaction facilitates its association with phyB and its subsequent light-induced degradation. Post-translationally, phosphorylated at Thr-10, Thr-197, Ser-202, Ser-464, Ser-465, Ser-466 and Ser-469 by CK2. Phosphorylated and ubiquitinated after an exposure to light (especially red and far-red), in a phytochrome-dependent manner. Modified proteins undergo a proteasome-dependent degradation. Its stability and degradation plays a central role in photomorphogenesis of seedlings. In terms of tissue distribution, mainly expressed in leaves, stems and seedlings, and, to a lower extent, in fruits, flowers and roots.

It localises to the nucleus. Its activity is regulated as follows. DNA-binding ability is inhibited by PCH1 and PCHL to negatively regulate the expressions of its target genes. In terms of biological role, transcription activator. Negatively regulates chlorophyll biosynthesis and seed germination in the dark, and lightinduced degradation of PIF1 relieves this negative regulation to promote photomorphogenesis. Binds to the G-box motif (5'-CACGTG-3') found in many light-regulated promoters. Promotes the expression of SOM, and thus modulates responses to abscisic acid (ABA) and gibberellic acid (GA). The sequence is that of Transcription factor PIF1 from Arabidopsis thaliana (Mouse-ear cress).